Reading from the N-terminus, the 382-residue chain is uncharacterized protein (382 aa).

The next 12 helical transmembrane spans lie at Gly-14–Ala-34, Val-45–Ile-65, Tyr-75–Trp-95, Phe-102–Ser-122, Leu-131–Ser-151, Leu-157–Phe-177, Val-206–Phe-226, Ala-235–Ile-255, Val-270–Pro-290, Ala-291–Cys-311, Ala-325–Met-345, and Phe-348–Leu-368.

It belongs to the major facilitator superfamily. YcaD (TC 2.A.1.26) family.

Its subcellular location is the cell inner membrane. This is an uncharacterized protein from Escherichia coli O17:K52:H18 (strain UMN026 / ExPEC).